The following is a 57-amino-acid chain: uncharacterized protein (57 aa).

A helical membrane pass occupies residues Pro3–Leu23. The disordered stretch occupies residues Lys38–Thr57.

It localises to the host membrane. This is an uncharacterized protein from Acidianus bottle-shaped virus (isolate Italy/Pozzuoli) (ABV).